The sequence spans 366 residues: Sigma54-dependent transcriptional activator SfnR (366 aa).

One can recognise a Sigma-54 factor interaction domain in the interval 21–250; it reads QVFEDPRSQA…LENVIHHSLL (230 aa). ATP contacts are provided by residues 49 to 56 and 112 to 121; these read GETGTGKE and ANGGTLFLDE.

In terms of biological role, involved in the dimethyl sulfide degradation pathway. Activates the expression of sfnG and sfnF. In Pseudomonas putida (Arthrobacter siderocapsulatus), this protein is Sigma54-dependent transcriptional activator SfnR.